The chain runs to 104 residues: Urease subunit beta (104 aa).

The protein belongs to the urease beta subunit family. Heterotrimer of UreA (gamma), UreB (beta) and UreC (alpha) subunits. Three heterotrimers associate to form the active enzyme.

It localises to the cytoplasm. It carries out the reaction urea + 2 H2O + H(+) = hydrogencarbonate + 2 NH4(+). The protein operates within nitrogen metabolism; urea degradation; CO(2) and NH(3) from urea (urease route): step 1/1. The sequence is that of Urease subunit beta from Rhodopseudomonas palustris (strain BisB5).